The primary structure comprises 204 residues: Dof zinc finger protein DOF3.1 (204 aa).

The disordered stretch occupies residues Met1–Glu25. A Dof-type zinc finger spans residues Leu29 to Thr83. The Zn(2+) site is built by Cys31, Cys34, Cys56, and Cys59. Disordered stretches follow at residues Arg70 to Leu128 and Arg182 to Asn204. A compositionally biased stretch (low complexity) spans Lys84–Asn102. Over residues Lys106 to Pro124 the composition is skewed to basic and acidic residues.

The protein localises to the nucleus. Its function is as follows. Transcription factor that binds specifically to a 5'-AA[AG]G-3' consensus core sequence. The chain is Dof zinc finger protein DOF3.1 (DOF3.1) from Arabidopsis thaliana (Mouse-ear cress).